A 370-amino-acid chain; its full sequence is Putative glutamate--cysteine ligase 2 (370 aa).

Belongs to the glutamate--cysteine ligase type 2 family. YbdK subfamily.

It catalyses the reaction L-cysteine + L-glutamate + ATP = gamma-L-glutamyl-L-cysteine + ADP + phosphate + H(+). ATP-dependent carboxylate-amine ligase which exhibits weak glutamate--cysteine ligase activity. The chain is Putative glutamate--cysteine ligase 2 from Herminiimonas arsenicoxydans.